The following is a 954-amino-acid chain: MKYNPNEIEAKWQKYWAENQTFAAKNNSEKPKHYVLDMFPYPSGAGLHVGHPLGYIASDVYSRFKRHQGFNVLHPMGYDSFGLPAEQYAIQTGQRPEDTTRVNIDGGVDKEGKQIAGYRKQLDKIGFSFDWAREVRTSNPDYYKHTQWIFIQLFNSWYCRKQGKAFDISELVTVFEESGNALVEAVCDDNVTIFTADEWKSYSDDQKEKILLQYRMTYLAETEVNWCPGLGTVLANDEIVNGVSERGGFPVIRKKMTQWSMRISAYAERLLQGLNDIDWSESIKESQRNWIGKSVGALVTFNVKNHDEVIEVFTTRPDTIFGVTFMTLAPEHDLVAKITTPEQKEAVEAYIEKTAKRSERERMADVKTISGVFTGAYAEHPFTKEAIPVWIGDYVLAGYGTGAVMAVPCGDERDYAFANFFKGQNGMQEIKNIFANVDISEAAYGSKDNVEIAASDFLNGLNYKDATAKAIYKLEEIGQGKGKTNYRLRDAVFSRQRYWGEPFPVYYVNGLPKMIDTQHLPIILPEVEKYLPTEDGLPPLGNAAVWAWDIKENKVVNTDLVDNVSIFPLELNTMPGWAGSSWYWMRYMDAHNENEFASKEALAYWENVDLYIGGSEHATGHLLYSRFWNKFLKDKGFAPTEEPFKKLINQGMILGTTAYVYRLEGTNTFVSKNKIKGQNVQPIRVDVHFVNSSDELNIEKFKAWREDFNTAEFIFDENGKYIVGREVEKMSKSYYNVVTPDDICAEYGADTLRLYEMFLGPLEQAKPWNTAGISGVFGFLKKLWRLYFDDNGLIVNNDEPTKDNLKSLHKTIKKVAEDIENFSFNTSVSQFMICVNELSSQNCHSRAILEPLAILVSPYAPHIAEELWAQLGHKTSISEVAFPVFDAKHLVETNKEYPVSFNGKMRFTIELPLDLTAAQIEEIVMKDERTQKQLDGRIPNKVIIVPGKIINLVG.

A 'HIGH' region motif is present at residues 40 to 51; it reads PYPSGAGLHVGH. The 'KMSKS' region signature appears at 729 to 733; the sequence is KMSKS. Lysine 732 lines the ATP pocket.

This sequence belongs to the class-I aminoacyl-tRNA synthetase family.

The protein localises to the cytoplasm. The catalysed reaction is tRNA(Leu) + L-leucine + ATP = L-leucyl-tRNA(Leu) + AMP + diphosphate. The chain is Leucine--tRNA ligase from Flavobacterium johnsoniae (strain ATCC 17061 / DSM 2064 / JCM 8514 / BCRC 14874 / CCUG 350202 / NBRC 14942 / NCIMB 11054 / UW101) (Cytophaga johnsonae).